The following is a 173-amino-acid chain: MTLLFPLIASEGGFGINLNLFETNLINLVIVIGVLYWFLKGFLGGMLERRRETILKDLQDAEKRLKTATIELSKAQEELSAAQQKAEKIRLDGQARAEAIRADGEKRTIQAMAALKQDALADLTAEGARLTEQLRREAALSAIDKALAELPNRLDSKAQAKLIDSSISNLEDV.

Residues 25 to 45 (LINLVIVIGVLYWFLKGFLGG) form a helical membrane-spanning segment.

This sequence belongs to the ATPase B chain family. As to quaternary structure, F-type ATPases have 2 components, F(1) - the catalytic core - and F(0) - the membrane proton channel. F(1) has five subunits: alpha(3), beta(3), gamma(1), delta(1), epsilon(1). F(0) has four main subunits: a(1), b(1), b'(1) and c(10-14). The alpha and beta chains form an alternating ring which encloses part of the gamma chain. F(1) is attached to F(0) by a central stalk formed by the gamma and epsilon chains, while a peripheral stalk is formed by the delta, b and b' chains.

It is found in the cellular thylakoid membrane. In terms of biological role, f(1)F(0) ATP synthase produces ATP from ADP in the presence of a proton or sodium gradient. F-type ATPases consist of two structural domains, F(1) containing the extramembraneous catalytic core and F(0) containing the membrane proton channel, linked together by a central stalk and a peripheral stalk. During catalysis, ATP synthesis in the catalytic domain of F(1) is coupled via a rotary mechanism of the central stalk subunits to proton translocation. Component of the F(0) channel, it forms part of the peripheral stalk, linking F(1) to F(0). This chain is ATP synthase subunit b, found in Synechococcus sp. (strain CC9311).